The chain runs to 272 residues: Shikimate dehydrogenase (NADP(+)) (272 aa).

Residues 14 to 16 (SKS) and Thr-61 contribute to the shikimate site. The Proton acceptor role is filled by Lys-65. An NADP(+)-binding site is contributed by Glu-77. Shikimate is bound by residues Asn-86 and Asp-102. Residues 126-130 (GAGGA), 150-155 (NRTFSK), and Met-213 contribute to the NADP(+) site. Tyr-215 provides a ligand contact to shikimate. Position 237 (Gly-237) interacts with NADP(+).

This sequence belongs to the shikimate dehydrogenase family. In terms of assembly, homodimer.

The catalysed reaction is shikimate + NADP(+) = 3-dehydroshikimate + NADPH + H(+). The protein operates within metabolic intermediate biosynthesis; chorismate biosynthesis; chorismate from D-erythrose 4-phosphate and phosphoenolpyruvate: step 4/7. In terms of biological role, involved in the biosynthesis of the chorismate, which leads to the biosynthesis of aromatic amino acids. Catalyzes the reversible NADPH linked reduction of 3-dehydroshikimate (DHSA) to yield shikimate (SA). This chain is Shikimate dehydrogenase (NADP(+)), found in Psychromonas ingrahamii (strain DSM 17664 / CCUG 51855 / 37).